Here is a 1692-residue protein sequence, read N- to C-terminus: Tyrosine-protein phosphatase non-receptor type 23 (1692 aa).

Residues 8–394 (PMIWLDLKEA…AKIEDKNEVL (387 aa)) enclose the BRO1 domain. TPR repeat units lie at residues 250–283 (AVAH…LNEA) and 374–407 (EEKA…DPET). A coiled-coil region spans residues 552–639 (KAVLQNLKRI…RALTEANVQY (88 aa)). Disordered regions lie at residues 711–788 (DREL…PATH), 884–923 (DSVQ…PQPQ), and 944–1199 (TYSI…LLQP). T744 carries the phosphothreonine modification. A his region spans residues 773-1186 (HFSPGPFPSS…SSSPESQHGG (414 aa)). Residues 774–785 (FSPGPFPSSTGP) show a composition bias toward low complexity. The span at 884–894 (DSVQAPISSHT) shows a compositional bias: polar residues. The span at 897–923 (RPNPTPALPQPCFPVPQPVPQSVPQPQ) shows a compositional bias: pro residues. R974 carries the post-translational modification Omega-N-methylarginine. Tandem repeats lie at residues 977–978 (PQ), 979–980 (AQ), 981–982 (AQ), 983–984 (PQ), 985–986 (PQ), 987–988 (PQ), 989–990 (PQ), 991–992 (PQ), 993–994 (PQ), 995–996 (PQ), 997–998 (PQ), 999–1000 (PQ), 1001–1002 (PQ), 1003–1004 (PQ), 1005–1006 (SQ), 1007–1008 (SQ), 1009–1010 (PQ), 1011–1012 (PQ), 1013–1014 (PQ), 1015–1016 (PQ), and 1017–1018 (PQ). Positions 977-1018 (PQAQAQPQPQPQPQPQPQPQPQPQPQPQSQSQPQPQPQPQPQ) are 21 X 2 AA approximate tandem repeats of P-Q. Over residues 984-1002 (QPQPQPQPQPQPQPQPQPQ) the composition is skewed to pro residues. 2 stretches are compositionally biased toward pro residues: residues 1093–1102 (FPSPGPPHPH) and 1127–1165 (GPPP…PPPC). A phosphoserine mark is found at S1178 and S1179. T1187 carries the post-translational modification Phosphothreonine. The Tyrosine-protein phosphatase domain occupies 1248–1508 (DAIWRELQEA…KFCHEALVRH (261 aa)). C1448 acts as the Phosphocysteine intermediate in catalysis. The segment at 1574–1638 (ASLPGLVEPP…PSSSLELLAS (65 aa)) is disordered. Residues 1598-1612 (SSSPPPLSSPLPEAP) show a composition bias toward pro residues. The segment covering 1620-1638 (VPEAPSLGPPSSSLELLAS) has biased composition (low complexity). Residue R1671 is modified to Omega-N-methylarginine.

It belongs to the protein-tyrosine phosphatase family. Non-receptor class subfamily. Interacts with GRAP2 and GRB2. Interacts with UBAP1 and CHMP4B.

It localises to the nucleus. It is found in the cytoplasm. Its subcellular location is the cytoplasmic vesicle. The protein resides in the endosome. The protein localises to the cytoskeleton. It localises to the cilium basal body. The enzyme catalyses O-phospho-L-tyrosyl-[protein] + H2O = L-tyrosyl-[protein] + phosphate. Plays a role in sorting of endocytic ubiquitinated cargos into multivesicular bodies (MVBs) via its interaction with the ESCRT-I complex (endosomal sorting complex required for transport I), and possibly also other ESCRT complexes. May act as a negative regulator of Ras-mediated mitogenic activity. Plays a role in ciliogenesis. This Mus musculus (Mouse) protein is Tyrosine-protein phosphatase non-receptor type 23 (Ptpn23).